A 669-amino-acid polypeptide reads, in one-letter code: Acyl-coenzyme A oxidase 1 (669 aa).

Residues T152 and G191 each contribute to the FAD site. E434 acts as the Proton acceptor in catalysis. Residue Y544 is modified to Phosphotyrosine. Position 551 is a phosphoserine (S551). A Microbody targeting signal motif is present at residues 667–669; it reads AHL.

Belongs to the acyl-CoA oxidase family. Homodimer. FAD serves as cofactor. In terms of tissue distribution, expressed in glia.

It localises to the peroxisome. It is found in the nucleus. The catalysed reaction is a 2,3-saturated acyl-CoA + O2 = a (2E)-enoyl-CoA + H2O2. It functions in the pathway lipid metabolism; peroxisomal fatty acid beta-oxidation. Functionally, catalyzes the desaturation of acyl-CoAs to 2-trans-enoyl-CoAs. First enzyme of the fatty acid beta-oxidation pathway. This Drosophila melanogaster (Fruit fly) protein is Acyl-coenzyme A oxidase 1.